The sequence spans 96 residues: Protein RnfH (96 aa).

Belongs to the UPF0125 (RnfH) family.

In Klebsiella pneumoniae (strain 342), this protein is Protein RnfH.